The chain runs to 227 residues: PKHD-type hydroxylase Bphyt_7102 (227 aa).

A Fe2OG dioxygenase domain is found at 80–179 (QVYPPLFNRY…RIASFFWVQS (100 aa)). Fe cation contacts are provided by His-98, Asp-100, and His-160. Arg-170 is a 2-oxoglutarate binding site.

Fe(2+) serves as cofactor. L-ascorbate is required as a cofactor.

The chain is PKHD-type hydroxylase Bphyt_7102 from Paraburkholderia phytofirmans (strain DSM 17436 / LMG 22146 / PsJN) (Burkholderia phytofirmans).